The primary structure comprises 423 residues: MDEVSPAVAVPFRPFTDPHAGLRGYCNGESRVTLPESSCSGDGAMKDSSFEINTRQDSLTSSSSAMAGVDISAGDEINGSDEFDPRSMNQSEKKVLSRTESRSLFEFKCVPLYGVTSICGRRPEMEDSVSTIPRFLQVSSSSLLDGRVTNGFNPHLSAHFFGVYDGHGGSQVANYCRERMHLALTEEIVKEKPEFCDGDTWQEKWKKALFNSFMRVDSEIETVAHAPETVGSTSVVAVVFPTHIFVANCGDSRAVLCRGKTPLALSVDHKPDRDDEAARIEAAGGKVIRWNGARVFGVLAMSRSIGDRYLKPSVIPDPEVTSVRRVKEDDCLILASDGLWDVMTNEEVCDLARKRILLWHKKNAMAGEALLPAEKRGEGKDPAAMSAAEYLSKMALQKGSKDNISVVVVDLKGIRKFKSKSLN.

Positions 74–95 (GDEINGSDEFDPRSMNQSEKKV) are disordered. Residues 112–411 (LYGVTSICGR…DNISVVVVDL (300 aa)) enclose the PPM-type phosphatase domain. Mg(2+) is bound by residues Asp165, Asp251, and Ser252. An intrachain disulfide couples Cys257 to Cys331. Asp337 and Asp402 together coordinate Mg(2+).

The protein belongs to the PP2C family. As to quaternary structure, interacts with SPK1, CIPK15/PKS3, GPX3, SCAR1, SCAR2, SCAR3 and SCARL. Also interacts with CIPK24/SOS2. Binds to the fibrillin precursor protein. Interacts with ABA-bounded PYR1, PYL1, PYL2, PYL3, PYL4, PYL5, PYL6, PYL8 and PYL9, and with free PYL2, PYL3 and PYL4. Interacts with and represses GHR1, and, to a lesser extent, SRK2E/OST1. Mg(2+) is required as a cofactor. Requires Mn(2+) as cofactor.

It carries out the reaction O-phospho-L-seryl-[protein] + H2O = L-seryl-[protein] + phosphate. The enzyme catalyses O-phospho-L-threonyl-[protein] + H2O = L-threonyl-[protein] + phosphate. Its activity is regulated as follows. Phosphatase activity repressed by oxidized ATGPX3, free fatty acids (e.g. arachidonic acid (20:4) and Linolenic acid (18:3)) and by H(2)O(2). Repressed by PYR/PYL/RCAR ABA receptors in an ABA-dependent manner. In terms of biological role, repressor of the abscisic acid (ABA) signaling pathway that regulates numerous ABA responses, such as stomatal closure, osmotic water permeability of the plasma membrane (Pos), high light stress, response to glucose, seed germination and inhibition of vegetative growth. During the stomatal closure regulation, modulates the inward calcium-channel permeability as well as H(2)O(2) and oxidative burst in response to ABA and dehydration. Represses GHR1 and, to some extent, SRK2E/OST1, kinases involved in the regulation of SLAC1-dependent stomatal closure. Controls negatively fibrillin that is involved in mediating ABA-induced photoprotection. May be implicated in ABA content regulation. Involved in acquired thermotolerance of root growth and seedling survival. Required for the Erwinia amylovora harpin-induced (HrpN) drought tolerance. Involved in the hydrotropic response. This is Protein phosphatase 2C 77 from Arabidopsis thaliana (Mouse-ear cress).